Consider the following 206-residue polypeptide: Holliday junction branch migration complex subunit RuvA (206 aa).

A domain I region spans residues 1 to 63 (MIASLRGTVI…EDAMKLYGFI (63 aa)). A domain II region spans residues 64-142 (DNESREMFSV…AFAAGVVDEG (79 aa)). The flexible linker stretch occupies residues 143–153 (GEQISLPNANI). The domain III stretch occupies residues 154-206 (ASEVVVEQVSQALVGLGFSEKQSDDAVSFVLAADPSLDTSGALRAALAKLSGK).

Belongs to the RuvA family. Homotetramer. Forms an RuvA(8)-RuvB(12)-Holliday junction (HJ) complex. HJ DNA is sandwiched between 2 RuvA tetramers; dsDNA enters through RuvA and exits via RuvB. An RuvB hexamer assembles on each DNA strand where it exits the tetramer. Each RuvB hexamer is contacted by two RuvA subunits (via domain III) on 2 adjacent RuvB subunits; this complex drives branch migration. In the full resolvosome a probable DNA-RuvA(4)-RuvB(12)-RuvC(2) complex forms which resolves the HJ.

The protein localises to the cytoplasm. Its function is as follows. The RuvA-RuvB-RuvC complex processes Holliday junction (HJ) DNA during genetic recombination and DNA repair, while the RuvA-RuvB complex plays an important role in the rescue of blocked DNA replication forks via replication fork reversal (RFR). RuvA specifically binds to HJ cruciform DNA, conferring on it an open structure. The RuvB hexamer acts as an ATP-dependent pump, pulling dsDNA into and through the RuvAB complex. HJ branch migration allows RuvC to scan DNA until it finds its consensus sequence, where it cleaves and resolves the cruciform DNA. The polypeptide is Holliday junction branch migration complex subunit RuvA (Corynebacterium glutamicum (strain ATCC 13032 / DSM 20300 / JCM 1318 / BCRC 11384 / CCUG 27702 / LMG 3730 / NBRC 12168 / NCIMB 10025 / NRRL B-2784 / 534)).